We begin with the raw amino-acid sequence, 156 residues long: Small ribosomal subunit protein uS7 (156 aa).

This sequence belongs to the universal ribosomal protein uS7 family. As to quaternary structure, part of the 30S ribosomal subunit. Contacts proteins S9 and S11.

In terms of biological role, one of the primary rRNA binding proteins, it binds directly to 16S rRNA where it nucleates assembly of the head domain of the 30S subunit. Is located at the subunit interface close to the decoding center, probably blocks exit of the E-site tRNA. The sequence is that of Small ribosomal subunit protein uS7 from Bartonella tribocorum (strain CIP 105476 / IBS 506).